A 209-amino-acid polypeptide reads, in one-letter code: Thiamine-phosphate synthase (209 aa).

Residues 32 to 36 and aspartate 64 each bind 4-amino-2-methyl-5-(diphosphooxymethyl)pyrimidine; that span reads QLRMK. Residues aspartate 65 and aspartate 84 each contribute to the Mg(2+) site. 4-amino-2-methyl-5-(diphosphooxymethyl)pyrimidine is bound at residue threonine 103. 129 to 131 serves as a coordination point for 2-[(2R,5Z)-2-carboxy-4-methylthiazol-5(2H)-ylidene]ethyl phosphate; that stretch reads TTT. Lysine 132 contacts 4-amino-2-methyl-5-(diphosphooxymethyl)pyrimidine. Residue glycine 165 coordinates 2-[(2R,5Z)-2-carboxy-4-methylthiazol-5(2H)-ylidene]ethyl phosphate.

The protein belongs to the thiamine-phosphate synthase family. The cofactor is Mg(2+).

It catalyses the reaction 2-[(2R,5Z)-2-carboxy-4-methylthiazol-5(2H)-ylidene]ethyl phosphate + 4-amino-2-methyl-5-(diphosphooxymethyl)pyrimidine + 2 H(+) = thiamine phosphate + CO2 + diphosphate. It carries out the reaction 2-(2-carboxy-4-methylthiazol-5-yl)ethyl phosphate + 4-amino-2-methyl-5-(diphosphooxymethyl)pyrimidine + 2 H(+) = thiamine phosphate + CO2 + diphosphate. The catalysed reaction is 4-methyl-5-(2-phosphooxyethyl)-thiazole + 4-amino-2-methyl-5-(diphosphooxymethyl)pyrimidine + H(+) = thiamine phosphate + diphosphate. The protein operates within cofactor biosynthesis; thiamine diphosphate biosynthesis; thiamine phosphate from 4-amino-2-methyl-5-diphosphomethylpyrimidine and 4-methyl-5-(2-phosphoethyl)-thiazole: step 1/1. Functionally, condenses 4-methyl-5-(beta-hydroxyethyl)thiazole monophosphate (THZ-P) and 2-methyl-4-amino-5-hydroxymethyl pyrimidine pyrophosphate (HMP-PP) to form thiamine monophosphate (TMP). The polypeptide is Thiamine-phosphate synthase (Bacteroides thetaiotaomicron (strain ATCC 29148 / DSM 2079 / JCM 5827 / CCUG 10774 / NCTC 10582 / VPI-5482 / E50)).